The primary structure comprises 415 residues: Adipocyte plasma membrane-associated protein (415 aa).

The Cytoplasmic portion of the chain corresponds to 1–39 (MNEPEGLRFRRLNRPHIITDETHEPQYKATSTYSGKVFR). The chain crosses the membrane as a helical span at residues 40-60 (VTLLTMVAFLLLPLLVVVFVL). Residues 61–412 (ESPIQPEVFS…RSPYLCKLDL (352 aa)) are Extracellular-facing. An N-linked (GlcNAc...) asparagine glycan is attached at asparagine 159.

Belongs to the strictosidine synthase family.

The protein localises to the membrane. This is Adipocyte plasma membrane-associated protein (apmap) from Danio rerio (Zebrafish).